The following is a 360-amino-acid chain: Protein Wnt-2 (360 aa).

Residues 1–25 form the signal peptide; the sequence is MNAPLAGIWPWLPLLLTWLAPEVSS. Cystine bridges form between cysteine 76-cysteine 87, cysteine 127-cysteine 135, cysteine 137-cysteine 157, cysteine 206-cysteine 220, cysteine 208-cysteine 215, cysteine 278-cysteine 309, cysteine 294-cysteine 304, cysteine 308-cysteine 348, cysteine 324-cysteine 339, cysteine 326-cysteine 336, and cysteine 331-cysteine 332. Serine 212 is lipidated: O-palmitoleoyl serine; by PORCN. The N-linked (GlcNAc...) asparagine glycan is linked to asparagine 295.

It belongs to the Wnt family. Post-translationally, palmitoleoylation is required for efficient binding to frizzled receptors. Depalmitoleoylation leads to Wnt signaling pathway inhibition.

The protein localises to the secreted. Its subcellular location is the extracellular space. It is found in the extracellular matrix. Functionally, ligand for members of the frizzled family of seven transmembrane receptors. Functions in the canonical Wnt signaling pathway that results in activation of transcription factors of the TCF/LEF family. Functions as a upstream regulator of FGF10 expression. Plays an important role in embryonic lung development. May contribute to embryonic brain development by regulating the proliferation of dopaminergic precursors and neurons. The chain is Protein Wnt-2 (WNT2) from Loxodonta africana (African elephant).